The chain runs to 533 residues: Chromosomal replication initiator protein DnaA (533 aa).

Residues 1–72 (MNDFWQHCSA…DLARDFWNAP (72 aa)) are domain I, interacts with DnaA modulators. The tract at residues 72 to 196 (PIEVQFVLDP…EAADSMYERS (125 aa)) is domain II. The disordered stretch occupies residues 83 to 110 (AGQRSPAGATPLAPRAPLPSANPAPVGP). Residues 96–110 (PRAPLPSANPAPVGP) show a composition bias toward pro residues. Positions 197–413 (KLNPVLTFDN…GALRKILAYS (217 aa)) are domain III, AAA+ region. Residues Gly-241, Gly-243, Lys-244, and Thr-245 each contribute to the ATP site. A domain IV, binds dsDNA region spans residues 414–533 (KFHGREITIE…LHVLEQTLKG (120 aa)).

Belongs to the DnaA family. As to quaternary structure, oligomerizes as a right-handed, spiral filament on DNA at oriC.

The protein localises to the cytoplasm. In terms of biological role, plays an essential role in the initiation and regulation of chromosomal replication. ATP-DnaA binds to the origin of replication (oriC) to initiate formation of the DNA replication initiation complex once per cell cycle. Binds the DnaA box (a 9 base pair repeat at the origin) and separates the double-stranded (ds)DNA. Forms a right-handed helical filament on oriC DNA; dsDNA binds to the exterior of the filament while single-stranded (ss)DNA is stabiized in the filament's interior. The ATP-DnaA-oriC complex binds and stabilizes one strand of the AT-rich DNA unwinding element (DUE), permitting loading of DNA polymerase. After initiation quickly degrades to an ADP-DnaA complex that is not apt for DNA replication. Binds acidic phospholipids. This Burkholderia mallei (strain NCTC 10247) protein is Chromosomal replication initiator protein DnaA.